A 145-amino-acid polypeptide reads, in one-letter code: Large ribosomal subunit protein uL13 (145 aa).

Belongs to the universal ribosomal protein uL13 family. Part of the 50S ribosomal subunit.

Functionally, this protein is one of the early assembly proteins of the 50S ribosomal subunit, although it is not seen to bind rRNA by itself. It is important during the early stages of 50S assembly. The chain is Large ribosomal subunit protein uL13 from Bacillus mycoides (strain KBAB4) (Bacillus weihenstephanensis).